The primary structure comprises 575 residues: Intermediate filament protein ifa-1 (575 aa).

Disordered stretches follow at residues 1 to 30 (MMEI…TGNV) and 45 to 72 (SGAG…EKKE). The segment at 1–72 (MMEITRETMS…RDSREREKKE (72 aa)) is head. A compositionally biased stretch (polar residues) spans 7–17 (ETMSFTSTTPS). Residues 63-72 (RDSREREKKE) show a composition bias toward basic and acidic residues. In terms of domain architecture, IF rod spans 69-422 (EKKEMSDLND…KMLEGEENRA (354 aa)). The tract at residues 73 to 104 (MSDLNDRLASYIEKVRFLEAQNRKLAADLDAL) is coil 1A. Positions 105–118 (RSKWGKDTHNIRNM) are linker 1. Residues 119–256 (YEGELVDAQK…RVHDNEIKEL (138 aa)) form a coil 1B region. The tract at residues 257-274 (QTLASRDTTPENREFFKN) is linker 12. A coil 2 region spans residues 275-422 (ELSSAIRDIR…KMLEGEENRA (148 aa)). The tract at residues 423 to 572 (GLKQLVEQVV…EERATHIQRQ (150 aa)) is tail. Residues 455–572 (SRQSFQRSAK…EERATHIQRQ (118 aa)) enclose the LTD domain.

This sequence belongs to the intermediate filament family. In terms of assembly, forms some heteromeric filaments with ifb-1. As to expression, isoform d is abundantly expressed in the marginal cells of the pharynx, forming apicobasally oriented thick filament bundles that are attached to the apical and basal plasma membrane by hemi-adherens junctions. Expression of isoform c is also seen in the excretory cells and in the uterus. Isoform c is detectable in the amphid sensory neurins and the pharyngeal-intestinal valve. Both isoform c and isoform d are expressed in the rectum and vulva and in some neurons of the tail. In larvae, expression is seen in the excretory cell, the vulva, the rectum and in the thick filament bundles of the pharynx. Expression in pharynx begins in late embryos.

It localises to the cytoplasm. Its function is as follows. Cytoplasmic intermediate filaments make up the structural component of the cytoskeleton providing mechanical strength to cells. Essential protein required during embryogenesis especially for survival past the L1 larva stage, involved in intestine morphogenesis. The polypeptide is Intermediate filament protein ifa-1 (ifa-1) (Caenorhabditis elegans).